The primary structure comprises 214 residues: Large ribosomal subunit protein eL14 (214 aa).

K79 is subject to N6-acetyllysine. K85 bears the N6-acetyllysine; alternate mark. K85 carries the N6-succinyllysine; alternate modification. A Glycyl lysine isopeptide (Lys-Gly) (interchain with G-Cter in SUMO2) cross-link involves residue K124. Phosphoserine is present on S139. The disordered stretch occupies residues P161–A214. A 1-1; approximate repeat occupies K170–A174. The tract at residues K170–P189 is 4 X 5 AA tandem repeats of Q-K-A-[APS]-X. A compositionally biased stretch (low complexity) spans A172–A214. 5 consecutive repeat copies span residues Q175 to A179, Q180 to G184, Q185 to P189, K192 to Q194, and K195 to Q197. The 2 X 3 AA tandem repeats of K-G-Q stretch occupies residues K192 to Q197. K203 carries the post-translational modification N6-succinyllysine.

Belongs to the eukaryotic ribosomal protein eL14 family. As to quaternary structure, component of the large ribosomal subunit.

Its subcellular location is the cytoplasm. Its function is as follows. Component of the large ribosomal subunit. The ribosome is a large ribonucleoprotein complex responsible for the synthesis of proteins in the cell. The protein is Large ribosomal subunit protein eL14 (RPL14) of Bos taurus (Bovine).